Consider the following 143-residue polypeptide: Transcriptional regulator MraZ (143 aa).

2 consecutive SpoVT-AbrB domains span residues 5-47 and 76-119; these read EFRH…PMKE and ATEC…DEAR.

Belongs to the MraZ family. As to quaternary structure, forms oligomers.

Its subcellular location is the cytoplasm. The protein localises to the nucleoid. In Enterococcus hirae, this protein is Transcriptional regulator MraZ.